Consider the following 86-residue polypeptide: Insulin (86 aa).

Cystine bridges form between C7-C72, C19-C85, and C71-C76. The propeptide at 33 to 63 is c peptide; it reads ELEDPQVGQADPGVVPEAGRLQPLALEMTLQ.

Belongs to the insulin family. In terms of assembly, heterodimer of a B chain and an A chain linked by two disulfide bonds.

Its subcellular location is the secreted. Its function is as follows. Insulin decreases blood glucose concentration. It increases cell permeability to monosaccharides, amino acids and fatty acids. It accelerates glycolysis, the pentose phosphate cycle, and glycogen synthesis in liver. In Chinchilla chinchilla (Short-tailed chinchilla), this protein is Insulin (INS).